The sequence spans 100 residues: Integration host factor subunit alpha (100 aa).

Residues 53-72 (FDLRDKRQRPGRNPKTGEEI) form a disordered region.

This sequence belongs to the bacterial histone-like protein family. In terms of assembly, heterodimer of an alpha and a beta chain.

This protein is one of the two subunits of integration host factor, a specific DNA-binding protein that functions in genetic recombination as well as in transcriptional and translational control. The polypeptide is Integration host factor subunit alpha (Pseudomonas entomophila (strain L48)).